Consider the following 311-residue polypeptide: Methionyl-tRNA formyltransferase (311 aa).

Residue 110-113 (SLLP) coordinates (6S)-5,6,7,8-tetrahydrofolate.

Belongs to the Fmt family.

The catalysed reaction is L-methionyl-tRNA(fMet) + (6R)-10-formyltetrahydrofolate = N-formyl-L-methionyl-tRNA(fMet) + (6S)-5,6,7,8-tetrahydrofolate + H(+). In terms of biological role, attaches a formyl group to the free amino group of methionyl-tRNA(fMet). The formyl group appears to play a dual role in the initiator identity of N-formylmethionyl-tRNA by promoting its recognition by IF2 and preventing the misappropriation of this tRNA by the elongation apparatus. In Streptococcus equi subsp. equi (strain 4047), this protein is Methionyl-tRNA formyltransferase.